Consider the following 279-residue polypeptide: Phosphonates import ATP-binding protein PhnC 2 (279 aa).

The region spanning L10 to S253 is the ABC transporter domain. Position 43–50 (G43–S50) interacts with ATP. Low complexity predominate over residues S253–T262. A disordered region spans residues S253–C279. Residues D263–C279 show a composition bias toward polar residues.

It belongs to the ABC transporter superfamily. Phosphonates importer (TC 3.A.1.9.1) family. In terms of assembly, the complex is composed of two ATP-binding proteins (PhnC), two transmembrane proteins (PhnE) and a solute-binding protein (PhnD).

Its subcellular location is the cell inner membrane. The enzyme catalyses phosphonate(out) + ATP + H2O = phosphonate(in) + ADP + phosphate + H(+). Its function is as follows. Part of the ABC transporter complex PhnCDE involved in phosphonates import. Responsible for energy coupling to the transport system. The polypeptide is Phosphonates import ATP-binding protein PhnC 2 (Cupriavidus metallidurans (strain ATCC 43123 / DSM 2839 / NBRC 102507 / CH34) (Ralstonia metallidurans)).